Reading from the N-terminus, the 609-residue chain is UvrABC system protein C (609 aa).

The region spanning 16–94 (SSPGVYRMYD…IKQYMPRYNV (79 aa)) is the GIY-YIG domain. The region spanning 203–238 (LQVMTELVSKMEASALALEYEQAASYRDQIAALRRV) is the UVR domain.

This sequence belongs to the UvrC family. In terms of assembly, interacts with UvrB in an incision complex.

Its subcellular location is the cytoplasm. The UvrABC repair system catalyzes the recognition and processing of DNA lesions. UvrC both incises the 5' and 3' sides of the lesion. The N-terminal half is responsible for the 3' incision and the C-terminal half is responsible for the 5' incision. The sequence is that of UvrABC system protein C from Shewanella sediminis (strain HAW-EB3).